The chain runs to 272 residues: Large ribosomal subunit protein uL2 (272 aa).

Residues 222 to 272 (GVAMNPIDHPLGGGEGKSSGGRAACTPWGKPEGVKTRKNKRTDKFIIKRRK) form a disordered region. The span at 263–272 (TDKFIIKRRK) shows a compositional bias: basic and acidic residues.

It belongs to the universal ribosomal protein uL2 family. As to quaternary structure, part of the 50S ribosomal subunit. Forms a bridge to the 30S subunit in the 70S ribosome.

Functionally, one of the primary rRNA binding proteins. Required for association of the 30S and 50S subunits to form the 70S ribosome, for tRNA binding and peptide bond formation. It has been suggested to have peptidyltransferase activity; this is somewhat controversial. Makes several contacts with the 16S rRNA in the 70S ribosome. The protein is Large ribosomal subunit protein uL2 of Thermodesulfovibrio yellowstonii (strain ATCC 51303 / DSM 11347 / YP87).